Reading from the N-terminus, the 396-residue chain is MAKEKFERTKPHVNIGTIGHVDHGKTTTTAAITKVLADAYPEENTAFAFDMIDKAPEEKERGITINISHVEYSTPKRHYAHVDAPGHADYIKNMITGAAQMDGAILVVAATDGPMPQTREHVLLARQVGVPYILVALNKCDMVDDEEIIELVEMEIRELLAEQDYDEEAPIVHISALKALEGDEKWVQSVIDLMQACDDSIPDPERELDKPFLMPIEDIFTITGRGTVVTGRVERGSLNVNEDIEIIGIKDKSMSTTVTGIEMFRKMMDYTEAGDNCGLLLRGTKREEVERGQVCIKPGAYTPHTKFEGSVYVLKKEEGGRHTPFMDNYRPQFYFRTTDVTGVIKLPEGTEMVMPGDNVEMSVELIQPVAMDEGLRFAIREGSRTVGAGRVTKILD.

In terms of domain architecture, tr-type G spans 10–205 (KPHVNIGTIG…ACDDSIPDPE (196 aa)). A G1 region spans residues 19–26 (GHVDHGKT). 19-26 (GHVDHGKT) is a GTP binding site. Threonine 26 provides a ligand contact to Mg(2+). The tract at residues 62 to 66 (GITIN) is G2. A G3 region spans residues 83-86 (DAPG). Residues 83-87 (DAPGH) and 138-141 (NKCD) contribute to the GTP site. A G4 region spans residues 138-141 (NKCD). A G5 region spans residues 175–177 (SAL).

The protein belongs to the TRAFAC class translation factor GTPase superfamily. Classic translation factor GTPase family. EF-Tu/EF-1A subfamily. As to quaternary structure, monomer.

The protein localises to the cytoplasm. It carries out the reaction GTP + H2O = GDP + phosphate + H(+). Functionally, GTP hydrolase that promotes the GTP-dependent binding of aminoacyl-tRNA to the A-site of ribosomes during protein biosynthesis. The polypeptide is Elongation factor Tu (Corynebacterium aurimucosum (strain ATCC 700975 / DSM 44827 / CIP 107346 / CN-1) (Corynebacterium nigricans)).